A 349-amino-acid chain; its full sequence is Ureidoglycolate dehydrogenase (NAD(+)) (349 aa).

The Proton acceptor role is filled by H116. Residues S140, 174–176, K224, and 306–308 contribute to the NAD(+) site; these read DMA and GQD.

The protein belongs to the LDH2/MDH2 oxidoreductase family. In terms of assembly, homodimer.

The protein localises to the cytoplasm. It catalyses the reaction (S)-ureidoglycolate + NAD(+) = N-carbamoyl-2-oxoglycine + NADH + H(+). It participates in nitrogen metabolism; (S)-allantoin degradation; oxalurate from (S)-ureidoglycolate: step 1/1. AllD plays a pivotal role as a metabolic branch-point enzyme in nitrogen utilization via the assimilation of allantoin. It is able to utilize allantoin as a sole source of nitrogen under anaerobic conditions. Catalyzes the oxidation of ureidoglycolate to oxalurate. The protein is Ureidoglycolate dehydrogenase (NAD(+)) of Escherichia coli O157:H7.